Reading from the N-terminus, the 351-residue chain is Ca(2+)/H(+) antiporter ChaA (351 aa).

Helical transmembrane passes span 4–24, 25–45, 59–79, 86–106, 130–150, 156–176, 205–225, 241–261, 282–302, 303–323, and 331–351; these read IFFILVAAGVPLSVIGSLMHW, PSAVLFAVYCVTIIALASYMG, IGGLLNATFGNAVELIISLFA, GIVLASLTGSVLGNLLLVAGL, GLLIFAIIVAFVIPEVFSVGM, LNLSIGISIIMILLYVAALYF, VATIVLFAATIVVAYISENLV, FIGVIIVAIVGNAAEHASAII, IAMFVAPVLVICSIFFPTSMP, LVFTLPELVAMVSAVLLMIAI, and WFEGATLLAAYVIMAIGFFLL.

The protein belongs to the Ca(2+):cation antiporter (CaCA) (TC 2.A.19) family. Cation/proton exchanger (CAX) subfamily. As to quaternary structure, homotrimer.

The protein resides in the cell membrane. Calcium efflux is tightly regulated by intracellular pH. Functionally, ca(+)/H(+) antiporter that extrudes calcium in exchange for external protons. Does not transport sodium or potassium. This Bacillus subtilis (strain 168) protein is Ca(2+)/H(+) antiporter ChaA (chaA).